A 316-amino-acid polypeptide reads, in one-letter code: Ornithine carbamoyltransferase (316 aa).

Residues 57–60 (STRT), Gln84, Arg108, and 135–138 (HPCQ) contribute to the carbamoyl phosphate site. L-ornithine is bound by residues Asn166, Asp230, and 234-235 (SM). Residues 269–270 (CL) and Arg297 each bind carbamoyl phosphate.

The protein belongs to the aspartate/ornithine carbamoyltransferase superfamily. OTCase family.

It localises to the cytoplasm. It catalyses the reaction carbamoyl phosphate + L-ornithine = L-citrulline + phosphate + H(+). Its pathway is amino-acid biosynthesis; L-arginine biosynthesis; L-arginine from L-ornithine and carbamoyl phosphate: step 1/3. Its function is as follows. Reversibly catalyzes the transfer of the carbamoyl group from carbamoyl phosphate (CP) to the N(epsilon) atom of ornithine (ORN) to produce L-citrulline. The sequence is that of Ornithine carbamoyltransferase from Bacillus cereus (strain ZK / E33L).